Reading from the N-terminus, the 365-residue chain is tRNA N6-adenosine threonylcarbamoyltransferase (365 aa).

Fe cation-binding residues include histidine 119 and histidine 123. Substrate is bound by residues 141–145 (LVSGG), aspartate 174, glycine 187, and asparagine 288. Aspartate 316 contributes to the Fe cation binding site.

It belongs to the KAE1 / TsaD family. Fe(2+) is required as a cofactor.

The protein localises to the cytoplasm. The enzyme catalyses L-threonylcarbamoyladenylate + adenosine(37) in tRNA = N(6)-L-threonylcarbamoyladenosine(37) in tRNA + AMP + H(+). Its function is as follows. Required for the formation of a threonylcarbamoyl group on adenosine at position 37 (t(6)A37) in tRNAs that read codons beginning with adenine. Is involved in the transfer of the threonylcarbamoyl moiety of threonylcarbamoyl-AMP (TC-AMP) to the N6 group of A37, together with TsaE and TsaB. TsaD likely plays a direct catalytic role in this reaction. This Rhizobium etli (strain CIAT 652) protein is tRNA N6-adenosine threonylcarbamoyltransferase.